We begin with the raw amino-acid sequence, 228 residues long: Probable transcriptional regulatory protein SilR (228 aa).

Positions 2-116 (KILIVEDDIK…ELLARVRTLL (115 aa)) constitute a Response regulatory domain. A 4-aspartylphosphate modification is found at Asp51. A DNA-binding region (ompR/PhoB-type) is located at residues 125 to 225 (ESQLKVADLS…VRGVGYMLEI (101 aa)).

In terms of processing, phosphorylated by SilS.

The protein resides in the cytoplasm. Its function is as follows. Component of the sil cation-efflux system that confers resistance to silver. Probable member of a two-component regulatory system SilS/SilR. This is Probable transcriptional regulatory protein SilR (silR) from Salmonella typhimurium.